The following is a 418-amino-acid chain: MTVAEKIRKIAADARAASLAMARLSSAAKNELLLRMAEALENNAPLITAENARDLEAGQQKGLSAAMLDRLMLDESRIKAMADGLREVAALPDPVGEVTHMWKRPNEITVGKMRIPLGVIGIIYESRPNVTSDAAALCLKAGNAVVLRGGSEAIHSNLAIAGLLQDQMRKLGIPVAALSLIPFPERAGVTEMLKQEEFIDVIIPRGGESLIRFVVEHSKIPVIKHYKGVCHIFVDATADFGMAEKIIINSKTQRPGVCNALETLLIHKDVAETFVPRIHEALSTLKVELRGDEAFRQFAPGVKAATEEDWYAEYLELILAARVVDDLDEAIAHINKYGSLHTEAIITSDYANSQRFLREVNSSVVLVNASTRFSDGNQLGLGAEIGISTTKLHSFGPMGLEDLTTTKFIVYGEGQIRQ.

Belongs to the gamma-glutamyl phosphate reductase family.

It localises to the cytoplasm. It carries out the reaction L-glutamate 5-semialdehyde + phosphate + NADP(+) = L-glutamyl 5-phosphate + NADPH + H(+). It functions in the pathway amino-acid biosynthesis; L-proline biosynthesis; L-glutamate 5-semialdehyde from L-glutamate: step 2/2. In terms of biological role, catalyzes the NADPH-dependent reduction of L-glutamate 5-phosphate into L-glutamate 5-semialdehyde and phosphate. The product spontaneously undergoes cyclization to form 1-pyrroline-5-carboxylate. The sequence is that of Gamma-glutamyl phosphate reductase from Geotalea daltonii (strain DSM 22248 / JCM 15807 / FRC-32) (Geobacter daltonii).